A 206-amino-acid chain; its full sequence is uncharacterized protein (206 aa).

A helical membrane pass occupies residues 166 to 186 (FYTGLSVIVGGATALALGLFF).

Its subcellular location is the membrane. This is an uncharacterized protein from Dictyostelium discoideum (Social amoeba).